Reading from the N-terminus, the 388-residue chain is MTGMTTDADLRELTVGTGAGGEQLGTDMVLNIGPQHPSTHGVLRLRLVLDGERVVSAEPVVGYMHRGAEKLFEVRDYRQIIVLANRHDWLSAFANELGVVLAVERLLGMEVPERATWLRMALAELNRVLNHLMFLGSYPLEIGAITPMFYAFRERETLQTALEEVSGGRIHYMFNRVGGLKEEVPAGWTGRARAAIGEVRRSLPDLDNLIRRNEIFLARTVGVGVLSAAQAAAYGASGPVARASGLDLDLRRDEPYLAYDQLDVPVVTRTAGDCHSRFEVLLDQVYVSLDLAEQCLDRVDRLTGPINTRLPKVLKAPEGHTYAWTENPLGINGYYLVSRGEKTPWRLKLRTASYANVQALATLLPGCLVPDLVAILGSMFFVVGDIDK.

The protein belongs to the complex I 49 kDa subunit family. As to quaternary structure, NDH-1 is composed of 14 different subunits. Subunits NuoB, C, D, E, F, and G constitute the peripheral sector of the complex.

The protein resides in the cell membrane. It catalyses the reaction a quinone + NADH + 5 H(+)(in) = a quinol + NAD(+) + 4 H(+)(out). Functionally, NDH-1 shuttles electrons from NADH, via FMN and iron-sulfur (Fe-S) centers, to quinones in the respiratory chain. The immediate electron acceptor for the enzyme in this species is believed to be a menaquinone. Couples the redox reaction to proton translocation (for every two electrons transferred, four hydrogen ions are translocated across the cytoplasmic membrane), and thus conserves the redox energy in a proton gradient. The polypeptide is NADH-quinone oxidoreductase subunit D 2 (Salinispora tropica (strain ATCC BAA-916 / DSM 44818 / JCM 13857 / NBRC 105044 / CNB-440)).